The following is a 220-amino-acid chain: Cytidylate kinase (220 aa).

ATP is bound at residue 9-17 (GPAASGKST).

It belongs to the cytidylate kinase family. Type 1 subfamily.

The protein localises to the cytoplasm. It catalyses the reaction CMP + ATP = CDP + ADP. The catalysed reaction is dCMP + ATP = dCDP + ADP. This Thermotoga maritima (strain ATCC 43589 / DSM 3109 / JCM 10099 / NBRC 100826 / MSB8) protein is Cytidylate kinase.